Reading from the N-terminus, the 81-residue chain is ATP synthase subunit c (81 aa).

Transmembrane regions (helical) follow at residues 6–26 (AAAS…GPGI) and 57–77 (LAFM…LLFA).

It belongs to the ATPase C chain family. F-type ATPases have 2 components, F(1) - the catalytic core - and F(0) - the membrane proton channel. F(1) has five subunits: alpha(3), beta(3), gamma(1), delta(1), epsilon(1). F(0) has four main subunits: a(1), b(1), b'(1) and c(10-14). The alpha and beta chains form an alternating ring which encloses part of the gamma chain. F(1) is attached to F(0) by a central stalk formed by the gamma and epsilon chains, while a peripheral stalk is formed by the delta, b and b' chains.

Its subcellular location is the cellular thylakoid membrane. F(1)F(0) ATP synthase produces ATP from ADP in the presence of a proton or sodium gradient. F-type ATPases consist of two structural domains, F(1) containing the extramembraneous catalytic core and F(0) containing the membrane proton channel, linked together by a central stalk and a peripheral stalk. During catalysis, ATP synthesis in the catalytic domain of F(1) is coupled via a rotary mechanism of the central stalk subunits to proton translocation. In terms of biological role, key component of the F(0) channel; it plays a direct role in translocation across the membrane. A homomeric c-ring of between 10-14 subunits forms the central stalk rotor element with the F(1) delta and epsilon subunits. This chain is ATP synthase subunit c, found in Picosynechococcus sp. (strain ATCC 27264 / PCC 7002 / PR-6) (Agmenellum quadruplicatum).